The chain runs to 610 residues: MAASKPVEAAMAAAAAPASGNGVGSSGGTAAPGSGAGTLPRWHVALAIGAPLLLGAGAMYLWSRRRRRREAGGRGDASGLKRNSERKTPEGRASPALGSGPDGSGDSLEMSSLDRAQAAKNKGNKYFKAGKYEQAIQCYTEAISLCPTEKNADLSTFYQNRAAAFEQLQKWKEVAQDCTKAVELNPKYVKALFRRAKAHEKLDNKKECLEDVTAVCILEGFQNEQSMLLADKVLKLLGKENAKEKYKNREPLMPSPQFIKSYFSSFTDDIISQPMLKGEKSDEDKDKEGEALEVKENSGYLKAKQYMEEENYDKIISECSKEIDAQGKYMAEALLLRATFYLLIGSANAAKPDLDKVISLKEANVKLRANALIKRGTMCMQQQQPMLSTQDFNMAAEIDPMNSDVYHHRGQLKILLDLVEEAVADFDACIRLRPKFALAQAQKCFALYRQAYTANNSSQVQAAMKGFEEVIKKFPRCAEGYALYAQALTDQQQFGKADEMYDKCIDLEPDNATTYVHKGLLQLQWKQDLDKGLELISKAIEIDNKCDFAYETMGTIEVQRGNMEKAIDMFNKAINLAKSEMEMAHLYSLCDAAHAQTEVAKKYGLKPPTL.

N-acetylalanine is present on Ala2. The Mitochondrial intermembrane portion of the chain corresponds to 2–41 (AASKPVEAAMAAAAAPASGNGVGSSGGTAAPGSGAGTLPR). Residues 42–62 (WHVALAIGAPLLLGAGAMYLW) traverse the membrane as a helical segment. Over 63–610 (SRRRRRREAG…KKYGLKPPTL (548 aa)) the chain is Cytoplasmic. The tract at residues 69–109 (REAGGRGDASGLKRNSERKTPEGRASPALGSGPDGSGDSLE) is disordered. Position 74 is an omega-N-methylarginine (Arg74). Over residues 93-108 (ASPALGSGPDGSGDSL) the composition is skewed to low complexity. 5 positions are modified to phosphoserine: Ser94, Ser99, Ser104, Ser107, and Ser112. TPR repeat units follow at residues 116–149 (AQAAKNKGNKYFKAGKYEQAIQCYTEAISLCPTE) and 155–188 (STFYQNRAAAFEQLQKWKEVAQDCTKAVELNPKY). At Lys187 the chain carries N6-acetyllysine. Residue Lys277 forms a Glycyl lysine isopeptide (Lys-Gly) (interchain with G-Cter in SUMO2) linkage. 8 TPR repeats span residues 296-329 (ENSGYLKAKQYMEEENYDKIISECSKEIDAQGKY), 331-364 (AEALLLRATFYLLIGSANAAKPDLDKVISLKEAN), 369-402 (ANALIKRGTMCMQQQQPMLSTQDFNMAAEIDPMN), 403-436 (SDVYHHRGQLKILLDLVEEAVADFDACIRLRPKF), 444-477 (CFALYRQAYTANNSSQVQAAMKGFEEVIKKFPRC), 478-511 (AEGYALYAQALTDQQQFGKADEMYDKCIDLEPDN), 513-546 (TTYVHKGLLQLQWKQDLDKGLELISKAIEIDNKC), and 547-580 (DFAYETMGTIEVQRGNMEKAIDMFNKAINLAKSE).

It belongs to the Tom70 family. In terms of assembly, forms part of the preprotein translocase complex of the outer mitochondrial membrane (TOM complex) which consists of at least 7 different proteins (TOMM5, TOMM6, TOMM7, TOMM20, TOMM22, TOMM40 and TOMM70). Interacts with CAPN8. Interacts with TRADD, TRAF6 and STING. Interacts with MAVS. Interacts with HSPA8 and HSP90AA1; both interactions are required for preprotein mitochondrial import. The interaction with HSP90AA1 is direct and mediates the association of TOMM70 with IRF3 and TBK1. Upon mitochondrial depolarization, interacts with PINK1; the interaction is required for PINK1-TOM-TIM23 supercomplex formation which is critical for PINK1 stabilization at the outer mitochondrial membrane, kinase activation and downstream mitophagy.

Its subcellular location is the mitochondrion outer membrane. Functionally, acts as a receptor of the preprotein translocase complex of the outer mitochondrial membrane (TOM complex). Recognizes and mediates the translocation of mitochondrial preproteins from the cytosol into the mitochondria in a chaperone dependent manner. Mediates TBK1 and IRF3 activation induced by MAVS in response to Sendai virus infection and promotes host antiviral responses during virus infection. The protein is Mitochondrial import receptor subunit TOM70 of Rattus norvegicus (Rat).